A 2135-amino-acid polypeptide reads, in one-letter code: Plexin-B1 (2135 aa).

The N-terminal stretch at 1–19 is a signal peptide; it reads MPALGPALLQALWAGWVLT. One can recognise a Sema domain in the interval 20–479; it reads LQPLPPTAFT…TQSTLLKVPV (460 aa). The Extracellular segment spans residues 20-1490; sequence LQPLPPTAFT…SPGAFPVAAQ (1471 aa). Asparagine 31 carries N-linked (GlcNAc...) asparagine glycosylation. 9 disulfides stabilise this stretch: cysteine 79–cysteine 88, cysteine 111–cysteine 119, cysteine 252–cysteine 377, cysteine 268–cysteine 322, cysteine 340–cysteine 364, cysteine 482–cysteine 499, cysteine 488–cysteine 533, cysteine 491–cysteine 508, and cysteine 502–cysteine 514. The N-linked (GlcNAc...) asparagine glycan is linked to asparagine 334. Asparagine 543 carries N-linked (GlcNAc...) asparagine glycosylation. A disulfide bridge connects residues cysteine 570 and cysteine 588. Disordered regions lie at residues 671 to 829 and 849 to 884; these read MVAS…TTFP and LPEA…PPAP. Positions 681 to 697 are enriched in pro residues; that stretch reads SPDPPARGGPSPSPPTA. 2 stretches are compositionally biased toward low complexity: residues 698–710 and 734–754; these read PKAL…DTLP and SPWG…TGSP. 3 IPT/TIG domains span residues 1070–1160, 1162–1249, and 1252–1375; these read PLIH…FAYQ, PKVH…FKYT, and PNIT…FSYE. N-linked (GlcNAc...) asparagine glycosylation is found at asparagine 1183, asparagine 1253, and asparagine 1330. Residues 1491 to 1511 traverse the membrane as a helical segment; the sequence is VGLGVGTSLLALGVIIIVLMY. The stretch at 1507–1539 forms a coiled coil; that stretch reads IVLMYRRKSKQALRDYKKVQIQLENLESSVRDR. The Cytoplasmic segment spans residues 1512–2135; the sequence is RRKSKQALRD…AAVENKVTDL (624 aa). The tract at residues 1883 to 1908 is disordered; that stretch reads PWHLVKPSDEPEPPRPRRGSLRGGER. A compositionally biased stretch (basic and acidic residues) spans 1888–1897; that stretch reads KPSDEPEPPR.

It belongs to the plexin family. As to quaternary structure, monomer, and heterodimer with PLXNB2 after proteolytic processing. Binds RAC1 that has been activated by GTP binding. Interaction with SEMA4D promotes binding of cytoplasmic ligands. Interacts with PLXNA1. Interacts with ARHGEF11 and ARHGEF12. Interacts with ERBB2. Interacts with MET. Interacts with MST1R. Interacts with RRAS. Interacts with RHOD. Interacts with RND1. Interacts with NRP1 and NRP2. Post-translationally, phosphorylated on tyrosine residues by ERBB2 and MET upon SEMA4D binding. In terms of processing, proteolytic processing favors heterodimerization with PLXNB2 and SEMA4D binding. Highly expressed in fetal kidney, and at slightly lower levels in fetal brain, lung and liver.

The protein resides in the cell membrane. The protein localises to the secreted. Its function is as follows. Receptor for SEMA4D. Plays a role in GABAergic synapse development. Mediates SEMA4A- and SEMA4D-dependent inhibitory synapse development. Plays a role in RHOA activation and subsequent changes of the actin cytoskeleton. Plays a role in axon guidance, invasive growth and cell migration. This chain is Plexin-B1 (PLXNB1), found in Homo sapiens (Human).